The chain runs to 255 residues: Thiazole synthase (255 aa).

Lys-96 functions as the Schiff-base intermediate with DXP in the catalytic mechanism. 1-deoxy-D-xylulose 5-phosphate is bound by residues Gly-157, 183–184 (AG), and 205–206 (NT).

The protein belongs to the ThiG family. As to quaternary structure, homotetramer. Forms heterodimers with either ThiH or ThiS.

It localises to the cytoplasm. The catalysed reaction is [ThiS sulfur-carrier protein]-C-terminal-Gly-aminoethanethioate + 2-iminoacetate + 1-deoxy-D-xylulose 5-phosphate = [ThiS sulfur-carrier protein]-C-terminal Gly-Gly + 2-[(2R,5Z)-2-carboxy-4-methylthiazol-5(2H)-ylidene]ethyl phosphate + 2 H2O + H(+). Its pathway is cofactor biosynthesis; thiamine diphosphate biosynthesis. Its function is as follows. Catalyzes the rearrangement of 1-deoxy-D-xylulose 5-phosphate (DXP) to produce the thiazole phosphate moiety of thiamine. Sulfur is provided by the thiocarboxylate moiety of the carrier protein ThiS. In vitro, sulfur can be provided by H(2)S. This chain is Thiazole synthase, found in Bacillus licheniformis (strain ATCC 14580 / DSM 13 / JCM 2505 / CCUG 7422 / NBRC 12200 / NCIMB 9375 / NCTC 10341 / NRRL NRS-1264 / Gibson 46).